Consider the following 168-residue polypeptide: Ribosome maturation factor RimM (168 aa).

One can recognise a PRC barrel domain in the interval 94–167 (DGQYYYHQII…FVTVELMEGL (74 aa)).

Belongs to the RimM family. In terms of assembly, binds ribosomal protein uS19.

The protein resides in the cytoplasm. In terms of biological role, an accessory protein needed during the final step in the assembly of 30S ribosomal subunit, possibly for assembly of the head region. Essential for efficient processing of 16S rRNA. May be needed both before and after RbfA during the maturation of 16S rRNA. It has affinity for free ribosomal 30S subunits but not for 70S ribosomes. This Limosilactobacillus reuteri (strain DSM 20016) (Lactobacillus reuteri) protein is Ribosome maturation factor RimM.